We begin with the raw amino-acid sequence, 913 residues long: Protein SEY1 homolog (913 aa).

At 1–825 the chain is on the cytoplasmic side; the sequence is MANASKTQII…ETGGQMSLKN (825 aa). One can recognise a GB1/RHD3-type G domain in the interval 33–288; that stretch reads GFNYNVIAIL…IPADGFAQYC (256 aa). 43 to 50 is a binding site for GTP; sequence GSQSSGKS. Disordered stretches follow at residues 89–108 and 436–455; these read AGGSSEGTDAESKNKSGDKP and TEQDDNLSNMDKSGESAKKG. 2 coiled-coil regions span residues 636–659 and 703–727; these read DDENNNFDEIDTEIDQSKNDMESL and IEIIIDALKIKLDEISNDIANVIIN. The helical transmembrane segment at 826-846 threads the bilayer; the sequence is VPFAFWVILLILGWNEILMFT. Residues 847 to 849 lie on the Lumenal side of the membrane; the sequence is RLF. Residues 850–870 traverse the membrane as a helical segment; it reads FRLNIILPMFMAFIIIVGSCL. Residues 871–913 are Cytoplasmic-facing; that stretch reads YTGNAQVLSYLNKIAFIVIKHSYNFYKHLQTVGNQPTKPEKVD.

Belongs to the TRAFAC class dynamin-like GTPase superfamily. GB1/RHD3 GTPase family. RHD3 subfamily.

It localises to the endoplasmic reticulum membrane. In terms of biological role, probable GTP-binding protein involved in generating and maintaining the structure of the tubular endoplasmic reticulum network. The sequence is that of Protein SEY1 homolog from Plasmodium chabaudi chabaudi.